A 264-amino-acid polypeptide reads, in one-letter code: Acyl-[acyl-carrier-protein]--UDP-N-acetylglucosamine O-acyltransferase (264 aa).

This sequence belongs to the transferase hexapeptide repeat family. LpxA subfamily. As to quaternary structure, homotrimer.

The protein resides in the cytoplasm. The catalysed reaction is a (3R)-hydroxyacyl-[ACP] + UDP-N-acetyl-alpha-D-glucosamine = a UDP-3-O-[(3R)-3-hydroxyacyl]-N-acetyl-alpha-D-glucosamine + holo-[ACP]. It participates in glycolipid biosynthesis; lipid IV(A) biosynthesis; lipid IV(A) from (3R)-3-hydroxytetradecanoyl-[acyl-carrier-protein] and UDP-N-acetyl-alpha-D-glucosamine: step 1/6. Involved in the biosynthesis of lipid A, a phosphorylated glycolipid that anchors the lipopolysaccharide to the outer membrane of the cell. The sequence is that of Acyl-[acyl-carrier-protein]--UDP-N-acetylglucosamine O-acyltransferase from Leptothrix cholodnii (strain ATCC 51168 / LMG 8142 / SP-6) (Leptothrix discophora (strain SP-6)).